The sequence spans 540 residues: Glucose-6-phosphate isomerase (540 aa).

The Proton donor role is filled by glutamate 350. Residues histidine 381 and lysine 503 contribute to the active site.

Belongs to the GPI family.

Its subcellular location is the cytoplasm. The enzyme catalyses alpha-D-glucose 6-phosphate = beta-D-fructose 6-phosphate. It functions in the pathway carbohydrate biosynthesis; gluconeogenesis. It participates in carbohydrate degradation; glycolysis; D-glyceraldehyde 3-phosphate and glycerone phosphate from D-glucose: step 2/4. Functionally, catalyzes the reversible isomerization of glucose-6-phosphate to fructose-6-phosphate. The sequence is that of Glucose-6-phosphate isomerase from Paraburkholderia phymatum (strain DSM 17167 / CIP 108236 / LMG 21445 / STM815) (Burkholderia phymatum).